Consider the following 293-residue polypeptide: RNA pseudouridylate synthase domain-containing protein 1 (293 aa).

Residue Asp-67 is part of the active site.

This sequence belongs to the pseudouridine synthase RluA family.

This is RNA pseudouridylate synthase domain-containing protein 1 (rpusd1) from Danio rerio (Zebrafish).